The primary structure comprises 319 residues: Pantothenate kinase (319 aa).

96–103 (GSVAVGKS) lines the ATP pocket.

This sequence belongs to the prokaryotic pantothenate kinase family.

Its subcellular location is the cytoplasm. It carries out the reaction (R)-pantothenate + ATP = (R)-4'-phosphopantothenate + ADP + H(+). It functions in the pathway cofactor biosynthesis; coenzyme A biosynthesis; CoA from (R)-pantothenate: step 1/5. The sequence is that of Pantothenate kinase from Bacillus velezensis (strain DSM 23117 / BGSC 10A6 / LMG 26770 / FZB42) (Bacillus amyloliquefaciens subsp. plantarum).